Reading from the N-terminus, the 458-residue chain is Light-independent protochlorophyllide reductase subunit N (458 aa).

The [4Fe-4S] cluster site is built by Cys20, Cys45, and Cys105.

Belongs to the BchN/ChlN family. As to quaternary structure, protochlorophyllide reductase is composed of three subunits; ChlL, ChlN and ChlB. Forms a heterotetramer of two ChlB and two ChlN subunits. [4Fe-4S] cluster is required as a cofactor.

The protein resides in the plastid. The protein localises to the chloroplast. The catalysed reaction is chlorophyllide a + oxidized 2[4Fe-4S]-[ferredoxin] + 2 ADP + 2 phosphate = protochlorophyllide a + reduced 2[4Fe-4S]-[ferredoxin] + 2 ATP + 2 H2O. Its pathway is porphyrin-containing compound metabolism; chlorophyll biosynthesis (light-independent). Component of the dark-operative protochlorophyllide reductase (DPOR) that uses Mg-ATP and reduced ferredoxin to reduce ring D of protochlorophyllide (Pchlide) to form chlorophyllide a (Chlide). This reaction is light-independent. The NB-protein (ChlN-ChlB) is the catalytic component of the complex. This Angiopteris evecta (Mule's foot fern) protein is Light-independent protochlorophyllide reductase subunit N.